Reading from the N-terminus, the 314-residue chain is DNA-directed RNA polymerase subunit alpha (314 aa).

The tract at residues 1–228 (MIEIEKPRIE…EHLNIFVGLT (228 aa)) is alpha N-terminal domain (alpha-NTD). Residues 245-314 (KEKVLEMSIE…DLGLGLRKED (70 aa)) are alpha C-terminal domain (alpha-CTD).

This sequence belongs to the RNA polymerase alpha chain family. Homodimer. The RNAP catalytic core consists of 2 alpha, 1 beta, 1 beta' and 1 omega subunit. When a sigma factor is associated with the core the holoenzyme is formed, which can initiate transcription.

The catalysed reaction is RNA(n) + a ribonucleoside 5'-triphosphate = RNA(n+1) + diphosphate. DNA-dependent RNA polymerase catalyzes the transcription of DNA into RNA using the four ribonucleoside triphosphates as substrates. The sequence is that of DNA-directed RNA polymerase subunit alpha from Staphylococcus aureus (strain bovine RF122 / ET3-1).